Reading from the N-terminus, the 265-residue chain is Probable trehalose-phosphate phosphatase (265 aa).

The active-site Nucleophile is D35. D35, D37, and D213 together coordinate Mg(2+). Residue 35 to 37 coordinates substrate; the sequence is DID.

Belongs to the trehalose phosphatase family. It depends on Mg(2+) as a cofactor.

The enzyme catalyses alpha,alpha-trehalose 6-phosphate + H2O = alpha,alpha-trehalose + phosphate. It functions in the pathway glycan biosynthesis; trehalose biosynthesis. Functionally, removes the phosphate from trehalose 6-phosphate to produce free trehalose. The chain is Probable trehalose-phosphate phosphatase (otsB) from Sinorhizobium fredii (strain NBRC 101917 / NGR234).